The primary structure comprises 231 residues: uncharacterized protein (231 aa).

The signal sequence occupies residues 1–19 (MKFKFLLTPLLSSVLFLSA). C20 carries the N-palmitoyl cysteine lipid modification. C20 carries the S-diacylglycerol cysteine lipid modification.

The protein belongs to the MG439/MG440 family.

The protein localises to the cell membrane. This is an uncharacterized protein from Mycoplasma pneumoniae (strain ATCC 29342 / M129 / Subtype 1) (Mycoplasmoides pneumoniae).